A 732-amino-acid chain; its full sequence is Engulfment and cell motility protein 2 (732 aa).

The residue at position 48 (Tyr48) is a Phosphotyrosine. Residues 323-497 enclose the ELMO domain; that stretch reads AQRDIIFELR…VVREQITRAL (175 aa). Ser515 is subject to Phosphoserine. Positions 565 to 686 constitute a PH domain; that stretch reads SSFRKIGNRR…LLGKDMSSEL (122 aa). An SH3-binding motif is present at residues 712-719; it reads PEAPPPVP. The residue at position 729 (Tyr729) is a Phosphotyrosine.

As to quaternary structure, interacts directly with the SH3-domain of DOCK1 via its SH3-binding site. Probably forms a heterotrimeric complex with DOCK1 and RAC1. Interacts with ARHGEF16, DOCK4 and EPHA2; mediates activation of RAC1 by EPHA2. Interacts with ADGRB3. Interacts with AUTS2; the interaction is direct.

Its subcellular location is the cytoplasm. The protein resides in the cytosol. The protein localises to the membrane. In terms of biological role, involved in cytoskeletal rearrangements required for phagocytosis of apoptotic cells and cell motility. Acts in association with DOCK1 and CRK. Was initially proposed to be required in complex with DOCK1 to activate Rac Rho small GTPases. May enhance the guanine nucleotide exchange factor (GEF) activity of DOCK1. This chain is Engulfment and cell motility protein 2 (Elmo2), found in Mus musculus (Mouse).